Here is a 428-residue protein sequence, read N- to C-terminus: Bifunctional IPC transferase and DIPP synthase (428 aa).

Residues 2–227 (VETAVILAGG…KAKKYLVKTA (226 aa)) form a mobA-like NTP transferase region. Residues 8 to 10 (LAG), lysine 25, glutamate 80, and glutamate 116 each bind CTP. Position 116 (glutamate 116) interacts with Mg(2+). The segment at 228–425 (IKGVGDGFIS…LTIYLVWKKK (198 aa)) is CDP-alcohol phosphatidyltransferases. 3 helical membrane passes run 266-286 (FLLG…GGIL), 336-356 (PSWD…MVSY), and 389-409 (MIMI…LAII).

This sequence in the N-terminal section; belongs to the MobA family. In the C-terminal section; belongs to the CDP-alcohol phosphatidyltransferase class-I family. The cofactor is Mg(2+).

Its subcellular location is the membrane. It catalyses the reaction 1D-myo-inositol 3-phosphate + CTP + H(+) = CDP-1L-myo-inositol + diphosphate. The catalysed reaction is CDP-1L-myo-inositol + 1D-myo-inositol 3-phosphate = bis(1L-myo-inositol) 3,1'-phosphate 1-phosphate + CMP + H(+). Its function is as follows. Involved in biosynthesis of di-myo-inositol phosphate (DIP), a widespread organic solute in microorganisms adapted to hot environments. Catalyzes the condensation of CTP and L-myo-inositol-1-phosphate into CDP-L-myo-inositol, as well as the biosynthesis of di-myo-inositol-1,3'-phosphate-1'-phosphate (DIPP) from CDP-L-myo-inositol and L-myo-inositol-1-phosphate. The polypeptide is Bifunctional IPC transferase and DIPP synthase (spsI) (Aquifex aeolicus (strain VF5)).